The chain runs to 654 residues: Endoplasmic reticulum chaperone BiP (654 aa).

Residues 1–18 (MKFTVVAAALLLLCAVRA) form the signal peptide. A required for interaction with ELAPOR1 region spans residues 1-80 (MKFTVVAAAL…EGERLIGDAA (80 aa)). 36 to 39 (GTTY) is an ATP binding site. Serine 86 is subject to Phosphoserine. Residue lysine 96 participates in ATP binding. Residue lysine 125 is modified to N6-acetyllysine. Residues 125–280 (KPYIQVDIGG…KKKTGKDVRK (156 aa)) form a nucleotide-binding (NBD) region. Residue tyrosine 160 is modified to 3'-nitrotyrosine. N6-acetyllysine is present on lysine 213. Residue 227–229 (GGT) coordinates ATP. Lysine 271 bears the N6-acetyllysine mark. 293-300 (EKAKRALS) is an ATP binding site. Lysine 326 carries the N6-acetyllysine modification. Lysine 352 participates in a covalent cross-link: Glycyl lysine isopeptide (Lys-Gly) (interchain with G-Cter in SUMO2). The residue at position 353 (lysine 353) is an N6-acetyllysine; alternate. A Glycyl lysine isopeptide (Lys-Gly) (interchain with G-Cter in SUMO1); alternate cross-link involves residue lysine 353. Residue 364-367 (GSTR) participates in ATP binding. An interdomain linker region spans residues 409–419 (QDTGDLVLLDV). Residues 420-500 (CPLTLGIETV…PRGVPQIEVT (81 aa)) form a substrate-binding (SBD) region. Residue lysine 447 is modified to N6-succinyllysine. An Omega-N-methylarginine modification is found at arginine 492. Threonine 518 carries the O-AMP-threonine; alternate modification. Threonine 518 carries the phosphothreonine; alternate modification. An N6,N6,N6-trimethyllysine; by METTL21A; in vitro modification is found at lysine 585. Lysine 585 is modified (N6,N6-dimethyllysine; alternate). Lysine 585 bears the N6-methyllysine; alternate mark. Lysine 591 carries the N6-methyllysine modification. Residues 631–654 (ISKLYGSGGPPPTGEEDTSEKDEL) form a disordered region. Phosphothreonine occurs at positions 643 and 648. Acidic residues predominate over residues 644–654 (GEEDTSEKDEL). Phosphoserine is present on serine 649. Residues 651-654 (KDEL) carry the Prevents secretion from ER motif.

It belongs to the heat shock protein 70 family. In terms of assembly, monomer and homooligomer; homooligomerization via the interdomain linker inactivates the chaperone activity and acts as a storage of HSPA5/BiP molecules. Interacts with DNAJC1 (via J domain). Component of an EIF2 complex at least composed of CELF1/CUGBP1, CALR, CALR3, EIF2S1, EIF2S2, HSP90B1 and HSPA5. Part of a large chaperone multiprotein complex comprising DNAJB11, HSP90B1, HSPA5, HYOU, PDIA2, PDIA4, PDIA6, PPIB, SDF2L1, UGGT1 and very small amounts of ERP29, but not, or at very low levels, CALR nor CANX. Interacts with TMEM132A and TRIM21. May form a complex with ERLEC1, OS9, SEL1L and SYVN1. Interacts with DNAJC10. Interacts with DNAJB9/ERdj4; leading to recruit HSPA5/BiP to ERN1/IRE1. Interacts with ERN1/IRE1 (via luminal domain); the interaction takes place following interaction with DNAJB9/ERdj4 and leads to inactivate ERN1/IRE1, the interaction also competitively inhibits ERN1 interaction with MANF. Interacts directly with MANF (via SAP domain); the interaction inhibits ATP binding to HSPA5/BiP and subsequent nucleotide exchange. Interacts with EIF2AK3/PERK (via luminal domain); interaction leads to inactivate EIF2AK3/PERK. Interacts with MX1. Interacts with METTL23. Interacts with CEMIP; the interaction induces calcium leakage from the endoplasmic reticulum and cell migration. Interacts with PCSK4 form; the interaction takes place in the endoplasmic reticulum. Interacts with CIPC. Interacts with CCDC88B (via C-terminus); the interaction opposes ERN1-mediated JNK activation, protecting against apoptosis. Interacts with INPP5K; necessary for INPP5K localization at the endoplasmic reticulum. Interacts with MANF; the interaction is direct. Interacts with LOXL2; leading to activate the ERN1/IRE1-XBP1 pathway of the unfolded protein response. Interacts with CLU under stressed condition; interaction increases CLU protein stability; facilitates its retrotranslocation and redistribution to the mitochondria; cooperatively suppress stress-induced apoptosis by stabilizing mitochondrial membrane integrity. Interacts with CCDC47. Interacts with CLN3. Interacts with ELAPOR1; may regulate the function of HSPA5 in apoptosis and cell proliferation. Interacts with CASP7. Interacts with ILDR2; the interaction stabilizes ILDR2 expression. Interacts with ADAM7. Post-translationally, in unstressed cells, AMPylation at Thr-518 by FICD inactivates the chaperome activity: AMPylated form is locked in a relatively inert state and only weakly stimulated by J domain-containing proteins. In response to endoplasmic reticulum stress, de-AMPylation by the same protein, FICD, restores the chaperone activity.

Its subcellular location is the endoplasmic reticulum lumen. It localises to the melanosome. The protein localises to the cytoplasm. It is found in the cell surface. The enzyme catalyses ATP + H2O = ADP + phosphate + H(+). With respect to regulation, the chaperone activity is regulated by ATP-induced allosteric coupling of the nucleotide-binding (NBD) and substrate-binding (SBD) domains. In the ADP-bound and nucleotide-free (apo) states, the two domains have little interaction. In contrast, in the ATP-bound state the two domains are tightly coupled, which results in drastically accelerated kinetics in both binding and release of polypeptide substrates. J domain-containing co-chaperones (DNAJB9/ERdj4 or DNAJC10/ERdj5) stimulate the ATPase activity and are required for efficient substrate recognition by HSPA5/BiP. Homooligomerization inactivates participating HSPA5/BiP protomers and probably act as reservoirs to store HSPA5/BiP molecules when they are not needed by the cell. Endoplasmic reticulum chaperone that plays a key role in protein folding and quality control in the endoplasmic reticulum lumen. Involved in the correct folding of proteins and degradation of misfolded proteins via its interaction with DNAJC10/ERdj5, probably to facilitate the release of DNAJC10/ERdj5 from its substrate. Acts as a key repressor of the EIF2AK3/PERK and ERN1/IRE1-mediated unfolded protein response (UPR). In the unstressed endoplasmic reticulum, recruited by DNAJB9/ERdj4 to the luminal region of ERN1/IRE1, leading to disrupt the dimerization of ERN1/IRE1, thereby inactivating ERN1/IRE1. Also binds and inactivates EIF2AK3/PERK in unstressed cells. Accumulation of misfolded protein in the endoplasmic reticulum causes release of HSPA5/BiP from ERN1/IRE1 and EIF2AK3/PERK, allowing their homodimerization and subsequent activation. Plays an auxiliary role in post-translational transport of small presecretory proteins across endoplasmic reticulum (ER). May function as an allosteric modulator for SEC61 channel-forming translocon complex, likely cooperating with SEC62 to enable the productive insertion of these precursors into SEC61 channel. Appears to specifically regulate translocation of precursors having inhibitory residues in their mature region that weaken channel gating. May also play a role in apoptosis and cell proliferation. This Rattus norvegicus (Rat) protein is Endoplasmic reticulum chaperone BiP.